A 160-amino-acid polypeptide reads, in one-letter code: Major strawberry allergen Fra a 1-E (160 aa).

This sequence belongs to the BetVI family. In terms of assembly, monomer. Interacts with AP. In terms of tissue distribution, highly expressed in roots. Expressed in open flowers. Expressed at low levels in leaves, flower buds and fruits.

In terms of biological role, involved in the control of flavonoid biosynthesis in fruits, probably by binding directly to natural flavonoids. Binds the natural flavonoid quercetin-3-O-glucuronide with affinities in the low micromolar range. The chain is Major strawberry allergen Fra a 1-E from Fragaria ananassa (Strawberry).